The chain runs to 274 residues: Cyclase-like protein 1 (274 aa).

The N-terminal stretch at 1-18 (MAASRLALLLLVLAVAAA) is a signal peptide.

This sequence belongs to the Cyclase 1 superfamily. In terms of tissue distribution, highly expressed in leaf sheaths. Expressed in leaf collars.

The protein resides in the secreted. It localises to the extracellular space. The protein localises to the extracellular matrix. Its function is as follows. May be involved in response to stresses. In Oryza sativa subsp. japonica (Rice), this protein is Cyclase-like protein 1.